Here is a 162-residue protein sequence, read N- to C-terminus: UPF0305 protein MMP0665 (162 aa).

It belongs to the UPF0305 family.

In Methanococcus maripaludis (strain DSM 14266 / JCM 13030 / NBRC 101832 / S2 / LL), this protein is UPF0305 protein MMP0665.